The primary structure comprises 137 residues: MLYHGVDLVEVARIRHAVVRYGQRFVQRVYTATEQADCLAGSGDVRYEALAARWAAKEACAKALGIGLRGLGALAVADRPRAGFHEIEVVRDNDGRPVLRLSGFAAEQAAALGICALAVSLSHTDELALASVVAWAG.

Positions 7 and 58 each coordinate Mg(2+).

Belongs to the P-Pant transferase superfamily. AcpS family. Mg(2+) is required as a cofactor.

It is found in the cytoplasm. The catalysed reaction is apo-[ACP] + CoA = holo-[ACP] + adenosine 3',5'-bisphosphate + H(+). Functionally, transfers the 4'-phosphopantetheine moiety from coenzyme A to a Ser of acyl-carrier-protein. The polypeptide is Holo-[acyl-carrier-protein] synthase (Chloroflexus aurantiacus (strain ATCC 29366 / DSM 635 / J-10-fl)).